The following is a 397-amino-acid chain: Transcription factor xenB (397 aa).

The disordered stretch occupies residues 220–249 (TISDFETGDRQTISRSDTNSEVRPIPESPS). Polar residues predominate over residues 229 to 240 (RQTISRSDTNSE).

In terms of biological role, transcription factor; part of the gene cluster that mediates the biosynthesis of xenoacremones such as xenoacremone A, a compound that shows inhibitory activity toward the PI3K/AKT signaling pathway and which has the ability to induce apoptosis of A549 lung cancer cells. Acts as a positive regulator of the xenoacremones biosynthesis gene cluster. The sequence is that of Transcription factor xenB from Xenoacremonium sinensis (Endophyte fungus).